A 130-amino-acid polypeptide reads, in one-letter code: MTTKRKPYIRSMAPNWWQKLGFYRFYILRESTAVTTMWFSILLIYGLFALKGGTQSWHEFVTFLQNPVILLVNIITLLGALLHTKTWFELAPKAANIVIKGEKMGSGPVIKLLWAVTIIVTMIILGIALL.

The next 3 helical transmembrane spans lie at 33–53, 60–80, and 109–129; these read AVTTMWFSILLIYGLFALKGG, FVTFLQNPVILLVNIITLLGA, and VIKLLWAVTIIVTMIILGIAL.

This sequence belongs to the FrdC family. In terms of assembly, part of an enzyme complex containing four subunits: a flavoprotein (FrdA), an iron-sulfur protein (FrdB), and two hydrophobic anchor proteins (FrdC and FrdD).

The protein resides in the cell inner membrane. Two distinct, membrane-bound, FAD-containing enzymes are responsible for the catalysis of fumarate and succinate interconversion; fumarate reductase is used in anaerobic growth, and succinate dehydrogenase is used in aerobic growth. Anchors the catalytic components of the fumarate reductase complex to the cell inner membrane, binds quinones. The chain is Fumarate reductase subunit C from Photorhabdus laumondii subsp. laumondii (strain DSM 15139 / CIP 105565 / TT01) (Photorhabdus luminescens subsp. laumondii).